We begin with the raw amino-acid sequence, 245 residues long: 1-(5-phosphoribosyl)-5-[(5-phosphoribosylamino)methylideneamino] imidazole-4-carboxamide isomerase (245 aa).

Asp13 functions as the Proton acceptor in the catalytic mechanism. Catalysis depends on Asp132, which acts as the Proton donor.

The protein belongs to the HisA/HisF family.

The protein resides in the cytoplasm. It catalyses the reaction 1-(5-phospho-beta-D-ribosyl)-5-[(5-phospho-beta-D-ribosylamino)methylideneamino]imidazole-4-carboxamide = 5-[(5-phospho-1-deoxy-D-ribulos-1-ylimino)methylamino]-1-(5-phospho-beta-D-ribosyl)imidazole-4-carboxamide. It functions in the pathway amino-acid biosynthesis; L-histidine biosynthesis; L-histidine from 5-phospho-alpha-D-ribose 1-diphosphate: step 4/9. This is 1-(5-phosphoribosyl)-5-[(5-phosphoribosylamino)methylideneamino] imidazole-4-carboxamide isomerase from Frankia alni (strain DSM 45986 / CECT 9034 / ACN14a).